We begin with the raw amino-acid sequence, 1210 residues long: Microtubule-associated tumor suppressor 1 homolog (1210 aa).

Disordered regions lie at residues 1–21, 370–404, 446–482, 513–545, and 585–618; these read MNDD…IRDK, DPHI…PYEM, VENG…NTTV, QPKD…LTMM, and HSKN…AGSE. The segment covering 370–379 has biased composition (basic and acidic residues); sequence DPHIDSHDND. Phosphoserine occurs at positions 375, 380, and 393. Polar residues predominate over residues 381 to 398; sequence DIQSSTEELTLRSVSGQR. Residues 446–455 show a composition bias toward basic and acidic residues; sequence VENGPRDAKR. Residues 473 to 482 are compositionally biased toward polar residues; sequence KSATKTNTTV. Residues 524 to 534 are compositionally biased toward low complexity; sequence PSPQVTGGSSP. The span at 585–605 shows a compositional bias: polar residues; it reads HSKNASLGVPRTTSATKSNQE. Serine 621 carries the post-translational modification Phosphoserine. Residues 683 to 771 form a disordered region; that stretch reads SKSLLVGSAP…YEEKPPKQAF (89 aa). Residues 692–702 are compositionally biased toward polar residues; sequence PKTSTTPGRSS. A coiled-coil region spans residues 876-1171; sequence IQHLLSEREE…RLSMENEELL (296 aa). Phosphoserine is present on residues serine 1143, serine 1164, serine 1185, serine 1195, serine 1199, serine 1201, serine 1203, serine 1204, and serine 1208. The segment at 1177–1210 is disordered; it reads GDLCSPKRSPTSSAIPFQSPRNSGSFSSPSISPR. Over residues 1195-1210 the composition is skewed to low complexity; sequence SPRNSGSFSSPSISPR.

Belongs to the MTUS1 family. As to quaternary structure, homodimer. Interacts with AGTR2. Interacts with PTPN6. In terms of tissue distribution, ubiquitously expressed, with highest levels in uterus and adrenal gland.

Its subcellular location is the mitochondrion. It localises to the golgi apparatus. It is found in the cell membrane. The protein resides in the nucleus. Its function is as follows. Cooperates with AGTR2 to inhibit ERK2 activation and cell proliferation. May be required for AGTR2 cell surface expression. Together with PTPN6, induces UBE2V2 expression upon angiotensin-II stimulation. This chain is Microtubule-associated tumor suppressor 1 homolog (Mtus1), found in Mus musculus (Mouse).